The chain runs to 487 residues: PPE family protein PPE10 (487 aa).

Positions 398–424 (APVGGLDSGNPNPGSGSAAAGSGANPG) are enriched in low complexity. Positions 398 to 487 (APVGGLDSGN…PRIGQPVGSE (90 aa)) are disordered. Polar residues predominate over residues 428 to 446 (PGTSYPSFVNSGSNDSGLR).

It belongs to the mycobacterial PPE family.

The protein localises to the secreted. Functionally, plays a major role in the integrity and stability of the capsule. In Mycobacterium tuberculosis (strain CDC 1551 / Oshkosh), this protein is PPE family protein PPE10 (PPE10).